The following is a 99-amino-acid chain: MYKITTIYLWLKSYLSFFIGLDNLDFLTLIRFFQCRLQNKLGLQDILDFFCNLCGHSMVRTCNMVEAAQKQNRITFGSIYVKLHPLVKLCTGIVWAPRV.

This is an uncharacterized protein from Saccharomyces cerevisiae (strain ATCC 204508 / S288c) (Baker's yeast).